Here is a 625-residue protein sequence, read N- to C-terminus: Chaperone protein DnaK (625 aa).

The residue at position 197 (Thr197) is a Phosphothreonine; by autocatalysis. The tract at residues 598-625 is disordered; the sequence is MYKKDDNASGEQSGGKKKDDDVIDAEVE.

The protein belongs to the heat shock protein 70 family.

Functionally, acts as a chaperone. This Campylobacter curvus (strain 525.92) protein is Chaperone protein DnaK.